The sequence spans 132 residues: Small ribosomal subunit protein uS8 (132 aa).

The protein belongs to the universal ribosomal protein uS8 family. In terms of assembly, part of the 30S ribosomal subunit. Contacts proteins S5 and S12.

One of the primary rRNA binding proteins, it binds directly to 16S rRNA central domain where it helps coordinate assembly of the platform of the 30S subunit. This is Small ribosomal subunit protein uS8 from Anaeromyxobacter dehalogenans (strain 2CP-1 / ATCC BAA-258).